The chain runs to 763 residues: Autophagy-related protein 18f (763 aa).

WD repeat units lie at residues 345–385 and 402–441; these read AHKS…STSR and FTNAVIQDICFSKDSNLIVVGSSRGTSHLFEINPEKEGDA. Residues 701–711 are compositionally biased toward polar residues; that stretch reads NESIQSPSTTT. The interval 701 to 763 is disordered; the sequence is NESIQSPSTT…SEDEDEEQVD (63 aa). Basic and acidic residues-rich tracts occupy residues 712-725 and 741-754; these read QDDKVATLEGHGTE and PVDKEGIAEEKNHS.

This sequence belongs to the WD repeat PROPPIN family. Component of the PI(3,5)P2 regulatory complex at least composed of ATG18, SAC/FIG4, FAB1 and VAC14. In terms of tissue distribution, expressed in roots, flowers and leaves.

The protein localises to the preautophagosomal structure membrane. It localises to the vacuole membrane. In terms of biological role, the PI(3,5)P2 regulatory complex regulates both the synthesis and turnover of phosphatidylinositol 3,5-bisphosphate (PtdIns(3,5)P2). Required for autophagy. This is Autophagy-related protein 18f (ATG18F) from Arabidopsis thaliana (Mouse-ear cress).